A 300-amino-acid polypeptide reads, in one-letter code: uncharacterized protein (300 aa).

A signal peptide spans 1-22; it reads MKSFVWTLLGALSLGSLTTAYG.

It is found in the endoplasmic reticulum. This is an uncharacterized protein from Schizosaccharomyces pombe (strain 972 / ATCC 24843) (Fission yeast).